A 275-amino-acid polypeptide reads, in one-letter code: Exosome complex component Rrp42 (275 aa).

It belongs to the RNase PH family. Rrp42 subfamily. Component of the archaeal exosome complex. Forms a hexameric ring-like arrangement composed of 3 Rrp41-Rrp42 heterodimers. The hexameric ring associates with a trimer of Rrp4 and/or Csl4 subunits.

It localises to the cytoplasm. In terms of biological role, non-catalytic component of the exosome, which is a complex involved in RNA degradation. Contributes to the structuring of the Rrp41 active site. The chain is Exosome complex component Rrp42 from Saccharolobus islandicus (strain L.S.2.15 / Lassen #1) (Sulfolobus islandicus).